The sequence spans 155 residues: 6,7-dimethyl-8-ribityllumazine synthase (155 aa).

Residues phenylalanine 24, 58–60, and 82–84 each bind 5-amino-6-(D-ribitylamino)uracil; these read AFE and VLI. 87–88 is a binding site for (2S)-2-hydroxy-3-oxobutyl phosphate; the sequence is AT. Catalysis depends on histidine 90, which acts as the Proton donor. A 5-amino-6-(D-ribitylamino)uracil-binding site is contributed by phenylalanine 115. Arginine 129 provides a ligand contact to (2S)-2-hydroxy-3-oxobutyl phosphate.

It belongs to the DMRL synthase family.

It carries out the reaction (2S)-2-hydroxy-3-oxobutyl phosphate + 5-amino-6-(D-ribitylamino)uracil = 6,7-dimethyl-8-(1-D-ribityl)lumazine + phosphate + 2 H2O + H(+). It functions in the pathway cofactor biosynthesis; riboflavin biosynthesis; riboflavin from 2-hydroxy-3-oxobutyl phosphate and 5-amino-6-(D-ribitylamino)uracil: step 1/2. Its function is as follows. Catalyzes the formation of 6,7-dimethyl-8-ribityllumazine by condensation of 5-amino-6-(D-ribitylamino)uracil with 3,4-dihydroxy-2-butanone 4-phosphate. This is the penultimate step in the biosynthesis of riboflavin. The protein is 6,7-dimethyl-8-ribityllumazine synthase of Chloroherpeton thalassium (strain ATCC 35110 / GB-78).